The following is a 359-amino-acid chain: Photosystem II protein D1 1 (359 aa).

The next 3 helical transmembrane spans lie at 29–46 (YVGW…AATT), 118–133 (HFLI…EWEL), and 142–156 (WICI…AASA). A chlorophyll a-binding site is contributed by His-118. A pheophytin a-binding site is contributed by Tyr-126. [CaMn4O5] cluster-binding residues include Asp-170 and Glu-189. Residues 197–218 (FHMLGVAGVFGGSLFSAMHGSL) form a helical membrane-spanning segment. His-198 is a chlorophyll a binding site. A quinone-binding positions include His-215 and 264 to 265 (SF). Fe cation is bound at residue His-215. His-272 contributes to the Fe cation binding site. Residues 274–288 (FLAAWPVVGIWFTAL) traverse the membrane as a helical segment. His-332, Glu-333, Asp-342, and Ala-344 together coordinate [CaMn4O5] cluster. The propeptide occupies 345-359 (AAESAPVALQAPAIG).

Belongs to the reaction center PufL/M/PsbA/D family. PSII is composed of 1 copy each of membrane proteins PsbA, PsbB, PsbC, PsbD, PsbE, PsbF, PsbH, PsbI, PsbJ, PsbK, PsbL, PsbM, PsbT, PsbX, PsbY, PsbZ, Psb30/Ycf12, peripheral proteins PsbO, CyanoQ (PsbQ), PsbU, PsbV and a large number of cofactors. It forms dimeric complexes. The D1/D2 heterodimer binds P680, chlorophylls that are the primary electron donor of PSII, and subsequent electron acceptors. It shares a non-heme iron and each subunit binds pheophytin, quinone, additional chlorophylls, carotenoids and lipids. D1 provides most of the ligands for the Mn4-Ca-O5 cluster of the oxygen-evolving complex (OEC). There is also a Cl(-1) ion associated with D1 and D2, which is required for oxygen evolution. The PSII complex binds additional chlorophylls, carotenoids and specific lipids. serves as cofactor. Tyr-161 forms a radical intermediate that is referred to as redox-active TyrZ, YZ or Y-Z. Post-translationally, C-terminally processed by CtpA; processing is essential to allow assembly of the oxygen-evolving complex and thus photosynthetic growth.

It is found in the cellular thylakoid membrane. It carries out the reaction 2 a plastoquinone + 4 hnu + 2 H2O = 2 a plastoquinol + O2. Its function is as follows. Photosystem II (PSII) is a light-driven water:plastoquinone oxidoreductase that uses light energy to abstract electrons from H(2)O, generating O(2) and a proton gradient subsequently used for ATP formation. It consists of a core antenna complex that captures photons, and an electron transfer chain that converts photonic excitation into a charge separation. The D1/D2 (PsbA/PsbD) reaction center heterodimer binds P680, the primary electron donor of PSII as well as several subsequent electron acceptors. The protein is Photosystem II protein D1 1 of Synechococcus sp. (strain RCC307).